The sequence spans 157 residues: SsrA-binding protein (157 aa).

The protein belongs to the SmpB family.

It is found in the cytoplasm. In terms of biological role, required for rescue of stalled ribosomes mediated by trans-translation. Binds to transfer-messenger RNA (tmRNA), required for stable association of tmRNA with ribosomes. tmRNA and SmpB together mimic tRNA shape, replacing the anticodon stem-loop with SmpB. tmRNA is encoded by the ssrA gene; the 2 termini fold to resemble tRNA(Ala) and it encodes a 'tag peptide', a short internal open reading frame. During trans-translation Ala-aminoacylated tmRNA acts like a tRNA, entering the A-site of stalled ribosomes, displacing the stalled mRNA. The ribosome then switches to translate the ORF on the tmRNA; the nascent peptide is terminated with the 'tag peptide' encoded by the tmRNA and targeted for degradation. The ribosome is freed to recommence translation, which seems to be the essential function of trans-translation. The sequence is that of SsrA-binding protein from Aquifex aeolicus (strain VF5).